The primary structure comprises 20 residues: Brevinin-1DYa (20 aa).

A disulfide bridge connects residues C14 and C20.

As to expression, expressed by the skin glands.

It localises to the secreted. Antimicrobial peptide. Has low activity against the Gram-positive bacterium S.aureus and the Gram-negative bacterium E.coli (MIC&lt;15 uM). Has a strong hemolytic activity. The polypeptide is Brevinin-1DYa (Rana dybowskii (Dybovsky's frog)).